A 213-amino-acid chain; its full sequence is tRNA (guanine-N(7)-)-methyltransferase (213 aa).

S-adenosyl-L-methionine contacts are provided by glutamate 44, glutamate 69, aspartate 96, and aspartate 118. Residue aspartate 118 is part of the active site. Residues lysine 122, aspartate 154, and 192-195 (TEYE) each bind substrate.

Belongs to the class I-like SAM-binding methyltransferase superfamily. TrmB family.

It carries out the reaction guanosine(46) in tRNA + S-adenosyl-L-methionine = N(7)-methylguanosine(46) in tRNA + S-adenosyl-L-homocysteine. The protein operates within tRNA modification; N(7)-methylguanine-tRNA biosynthesis. Catalyzes the formation of N(7)-methylguanine at position 46 (m7G46) in tRNA. This Limosilactobacillus reuteri (strain DSM 20016) (Lactobacillus reuteri) protein is tRNA (guanine-N(7)-)-methyltransferase.